Here is a 568-residue protein sequence, read N- to C-terminus: Potassium-transporting ATPase potassium-binding subunit (568 aa).

The next 10 helical transmembrane spans lie at 3–23 (TEILGVAVQIVLMVVLAYPLG), 64–84 (FLKALLILNAFWFVWGMVLLV), 133–153 (FVIMLFQFITAATGMAAMAGV), 179–199 (ILLPLSLVVGFILILQGTPMG), 255–275 (MVECWSILIIPMAMVLALGFY), 281–301 (LGYSIFGVMLFAYLAGVFINV), 375–395 (FGGVGVGWLNYYTFIIMAVFI), 418–438 (IATFVALLHPFVILVFTAISS), 497–517 (IVLILSRFIPIVGQVAIAGLL), and 535–555 (VTFAVMTFAVIFIVAALSFFP).

Belongs to the KdpA family. The system is composed of three essential subunits: KdpA, KdpB and KdpC.

The protein localises to the cell inner membrane. Part of the high-affinity ATP-driven potassium transport (or Kdp) system, which catalyzes the hydrolysis of ATP coupled with the electrogenic transport of potassium into the cytoplasm. This subunit binds the periplasmic potassium ions and delivers the ions to the membrane domain of KdpB through an intramembrane tunnel. The sequence is that of Potassium-transporting ATPase potassium-binding subunit from Bacteroides fragilis (strain ATCC 25285 / DSM 2151 / CCUG 4856 / JCM 11019 / LMG 10263 / NCTC 9343 / Onslow / VPI 2553 / EN-2).